The chain runs to 237 residues: Endonuclease V (237 aa).

Residues Asp-46 and Asp-114 each contribute to the Mg(2+) site.

The protein belongs to the endonuclease V family. Requires Mg(2+) as cofactor.

The protein localises to the cytoplasm. The enzyme catalyses Endonucleolytic cleavage at apurinic or apyrimidinic sites to products with a 5'-phosphate.. In terms of biological role, DNA repair enzyme involved in the repair of deaminated bases. Selectively cleaves double-stranded DNA at the second phosphodiester bond 3' to a deoxyinosine leaving behind the intact lesion on the nicked DNA. The sequence is that of Endonuclease V from Xanthomonas axonopodis pv. citri (strain 306).